A 66-amino-acid chain; its full sequence is Photosystem II reaction center protein J (66 aa).

The segment at 1–25 is disordered; sequence MSGKKSPYPDGRIPDRNPDGTPAVP. Residues 37 to 57 traverse the membrane as a helical segment; the sequence is LWLVATAGGMAVLFVVGLFFY.

Belongs to the PsbJ family. In terms of assembly, PSII is composed of 1 copy each of membrane proteins PsbA, PsbB, PsbC, PsbD, PsbE, PsbF, PsbH, PsbI, PsbJ, PsbK, PsbL, PsbM, PsbT, PsbX, PsbY, PsbZ, Psb30/Ycf12, peripheral proteins PsbO, CyanoQ (PsbQ), PsbU, PsbV and a large number of cofactors. It forms dimeric complexes.

The protein localises to the cellular thylakoid membrane. One of the components of the core complex of photosystem II (PSII). PSII is a light-driven water:plastoquinone oxidoreductase that uses light energy to abstract electrons from H(2)O, generating O(2) and a proton gradient subsequently used for ATP formation. It consists of a core antenna complex that captures photons, and an electron transfer chain that converts photonic excitation into a charge separation. The chain is Photosystem II reaction center protein J from Synechococcus sp. (strain CC9605).